The sequence spans 155 residues: Small ribosomal subunit protein uS7 (155 aa).

This sequence belongs to the universal ribosomal protein uS7 family. Part of the 30S ribosomal subunit. Contacts proteins S9 and S11.

In terms of biological role, one of the primary rRNA binding proteins, it binds directly to 16S rRNA where it nucleates assembly of the head domain of the 30S subunit. Is located at the subunit interface close to the decoding center, probably blocks exit of the E-site tRNA. The chain is Small ribosomal subunit protein uS7 from Sulfurimonas denitrificans (strain ATCC 33889 / DSM 1251) (Thiomicrospira denitrificans (strain ATCC 33889 / DSM 1251)).